A 328-amino-acid chain; its full sequence is GTP 3',8-cyclase (328 aa).

One can recognise a Radical SAM core domain in the interval 1–229; it reads MNQVDYLRIS…DAQVRGSGPA (229 aa). Residue Arg8 coordinates GTP. [4Fe-4S] cluster contacts are provided by Cys15 and Cys19. Tyr21 contacts S-adenosyl-L-methionine. Cys22 contributes to the [4Fe-4S] cluster binding site. A GTP-binding site is contributed by Arg60. S-adenosyl-L-methionine is bound at residue Gly64. Thr91 is a GTP binding site. Residue Ser115 participates in S-adenosyl-L-methionine binding. Lys155 serves as a coordination point for GTP. Met189 is a binding site for S-adenosyl-L-methionine. Cys252 and Cys255 together coordinate [4Fe-4S] cluster. 257–259 is a GTP binding site; sequence RMR. A [4Fe-4S] cluster-binding site is contributed by Cys269.

The protein belongs to the radical SAM superfamily. MoaA family. In terms of assembly, monomer and homodimer. It depends on [4Fe-4S] cluster as a cofactor.

It carries out the reaction GTP + AH2 + S-adenosyl-L-methionine = (8S)-3',8-cyclo-7,8-dihydroguanosine 5'-triphosphate + 5'-deoxyadenosine + L-methionine + A + H(+). The protein operates within cofactor biosynthesis; molybdopterin biosynthesis. Functionally, catalyzes the cyclization of GTP to (8S)-3',8-cyclo-7,8-dihydroguanosine 5'-triphosphate. The polypeptide is GTP 3',8-cyclase (Trichormus variabilis (strain ATCC 29413 / PCC 7937) (Anabaena variabilis)).